The primary structure comprises 102 residues: Peptide chaperone MftB (102 aa).

Belongs to the peptide chaperone MftB family.

Functionally, peptide chaperone involved in the biosynthesis of the enzyme cofactor mycofactocin (MFT). Binds MftA and MftC with high affinity, and is essential for MftC activity on MftA, likely via the formation of a ternary complex. Is required for the in vivo ethanol assimilation in M.smegmatis. The protein is Peptide chaperone MftB of Mycolicibacterium smegmatis (strain ATCC 700084 / mc(2)155) (Mycobacterium smegmatis).